Consider the following 255-residue polypeptide: Flagellar brake protein YcgR (255 aa).

In terms of domain architecture, PilZ spans 130–245 (QRREHFRVPL…MAAHLQRFVM (116 aa)).

It belongs to the YcgR family. As to quaternary structure, monomer. Interacts with the flagellar basal bodies.

The protein resides in the bacterial flagellum basal body. Functionally, acts as a flagellar brake, regulating swimming and swarming in a bis-(3'-5') cyclic diguanylic acid (c-di-GMP)-dependent manner. Binds 1 c-di-GMP dimer per subunit. Increasing levels of c-di-GMP lead to decreased motility. This chain is Flagellar brake protein YcgR, found in Thiobacillus denitrificans (strain ATCC 25259 / T1).